The chain runs to 100 residues: Small ribosomal subunit protein uS14c (100 aa).

It belongs to the universal ribosomal protein uS14 family. As to quaternary structure, part of the 30S ribosomal subunit.

It localises to the plastid. Its subcellular location is the chloroplast. In terms of biological role, binds 16S rRNA, required for the assembly of 30S particles. This Cycas taitungensis (Prince sago) protein is Small ribosomal subunit protein uS14c.